The chain runs to 1444 residues: RNA-directed RNA polymerase P1 (1444 aa).

The tract at residues 157-181 (EEIQMDESQSDKRRRKKRMEKSRPV) is disordered. Residues 690–897 (LGVGFATLYQ…KTVISHISGE (208 aa)) form the RdRp catalytic domain.

It belongs to the reoviridae RNA-directed RNA polymerase family.

Its subcellular location is the virion. It localises to the host cytoplasm. It catalyses the reaction RNA(n) + a ribonucleoside 5'-triphosphate = RNA(n+1) + diphosphate. In terms of biological role, RNA-directed RNA polymerase that is involved in both transcription and genome replication. Together with the capping enzyme P5 and protein P7, forms an enzyme complex positioned near the channels situated at each of the five-fold vertices of the core. In Rice dwarf virus (isolate Akita) (RDV), this protein is RNA-directed RNA polymerase P1.